We begin with the raw amino-acid sequence, 844 residues long: Protein translocase subunit SecA (844 aa).

ATP-binding positions include Gln89, 107–111 (GEGKT), and Asp497. Cys829, Cys831, Cys840, and His841 together coordinate Zn(2+).

The protein belongs to the SecA family. In terms of assembly, monomer and homodimer. Part of the essential Sec protein translocation apparatus which comprises SecA, SecYEG and auxiliary proteins SecDF. Other proteins may also be involved. Zn(2+) serves as cofactor.

The protein localises to the cell membrane. Its subcellular location is the cytoplasm. It carries out the reaction ATP + H2O + cellular proteinSide 1 = ADP + phosphate + cellular proteinSide 2.. Part of the Sec protein translocase complex. Interacts with the SecYEG preprotein conducting channel. Has a central role in coupling the hydrolysis of ATP to the transfer of proteins into and across the cell membrane, serving as an ATP-driven molecular motor driving the stepwise translocation of polypeptide chains across the membrane. The protein is Protein translocase subunit SecA of Streptococcus suis (strain 98HAH33).